A 280-amino-acid polypeptide reads, in one-letter code: DNA repair protein RecO (280 aa).

Residues 261 to 280 (DMAHGNHTGQEDLPATASGA) are disordered.

Belongs to the RecO family.

In terms of biological role, involved in DNA repair and RecF pathway recombination. This Mycolicibacterium smegmatis (strain ATCC 700084 / mc(2)155) (Mycobacterium smegmatis) protein is DNA repair protein RecO.